Reading from the N-terminus, the 361-residue chain is Peptide chain release factor 1 (361 aa).

Residue Q236 is modified to N5-methylglutamine. Positions 285 to 309 (TAKDSARAADRKAQVGSGDRSERIR) are enriched in basic and acidic residues. A disordered region spans residues 285-313 (TAKDSARAADRKAQVGSGDRSERIRTYNF).

It belongs to the prokaryotic/mitochondrial release factor family. In terms of processing, methylated by PrmC. Methylation increases the termination efficiency of RF1.

Its subcellular location is the cytoplasm. In terms of biological role, peptide chain release factor 1 directs the termination of translation in response to the peptide chain termination codons UAG and UAA. The protein is Peptide chain release factor 1 of Methylorubrum populi (strain ATCC BAA-705 / NCIMB 13946 / BJ001) (Methylobacterium populi).